The chain runs to 187 residues: Elongation factor P (187 aa).

It belongs to the elongation factor P family.

It localises to the cytoplasm. It functions in the pathway protein biosynthesis; polypeptide chain elongation. In terms of biological role, involved in peptide bond synthesis. Stimulates efficient translation and peptide-bond synthesis on native or reconstituted 70S ribosomes in vitro. Probably functions indirectly by altering the affinity of the ribosome for aminoacyl-tRNA, thus increasing their reactivity as acceptors for peptidyl transferase. The polypeptide is Elongation factor P (Erythrobacter litoralis (strain HTCC2594)).